Consider the following 483-residue polypeptide: Probable glycine dehydrogenase (decarboxylating) subunit 2 (483 aa).

An N6-(pyridoxal phosphate)lysine modification is found at Lys267.

It belongs to the GcvP family. C-terminal subunit subfamily. The glycine cleavage system is composed of four proteins: P, T, L and H. In this organism, the P 'protein' is a heterodimer of two subunits. Pyridoxal 5'-phosphate is required as a cofactor.

It catalyses the reaction N(6)-[(R)-lipoyl]-L-lysyl-[glycine-cleavage complex H protein] + glycine + H(+) = N(6)-[(R)-S(8)-aminomethyldihydrolipoyl]-L-lysyl-[glycine-cleavage complex H protein] + CO2. The glycine cleavage system catalyzes the degradation of glycine. The P protein binds the alpha-amino group of glycine through its pyridoxal phosphate cofactor; CO(2) is released and the remaining methylamine moiety is then transferred to the lipoamide cofactor of the H protein. In Kosmotoga olearia (strain ATCC BAA-1733 / DSM 21960 / TBF 19.5.1), this protein is Probable glycine dehydrogenase (decarboxylating) subunit 2.